Here is a 208-residue protein sequence, read N- to C-terminus: 3-demethoxyubiquinol 3-hydroxylase (208 aa).

Positions 57, 87, 90, 139, 171, and 174 each coordinate Fe cation.

The protein belongs to the COQ7 family. It depends on Fe cation as a cofactor.

The protein resides in the cell membrane. It carries out the reaction a 5-methoxy-2-methyl-3-(all-trans-polyprenyl)benzene-1,4-diol + AH2 + O2 = a 3-demethylubiquinol + A + H2O. Its pathway is cofactor biosynthesis; ubiquinone biosynthesis. Its function is as follows. Catalyzes the hydroxylation of 2-nonaprenyl-3-methyl-6-methoxy-1,4-benzoquinol during ubiquinone biosynthesis. The protein is 3-demethoxyubiquinol 3-hydroxylase of Burkholderia lata (strain ATCC 17760 / DSM 23089 / LMG 22485 / NCIMB 9086 / R18194 / 383).